The sequence spans 618 residues: MFDLEYQLKNLPDKPGVYLMKNNLGEIIYVGKAKILKNRVRQYFQKSQKHSEKVKAMVKNIEEFEYIITDSEIEALILECNLIKKYRPKYNILLKDDKHYPFIKVTLAEDFPRVISTRKVTKDGSKYFGPYVDGSSVKDIIELIKKTFPIRTCKKNIVEGAKAIRPCLNYQIGLCKAPCAQYIKKSEYREIIDDVIKLLSGKHLDIVENFKLNMEKAAGNLEFEKAAMLRDKINIIEKIGEKQKIILNNFDNEDYISLYSDGKDTCFQVFFLRNGKIVGREHFIIEDTFDTNSSTLISNFLKEFYGGTAYIPKTIYVPNIEDEVLLEQWLTLKKESKSTIKIPIKGEKKNILDLVEKNAKTTLENFKLKYLQEKALYDNVLKDLKNILRLQEEPIRIEAFDISNIQGFDSVGSMVVFEKGRAKPSDYRRFKINTVKGADDYKSMKEILTRRFQHGLSEIKSIQDRKLEFSSGKFSVFPDLILMDGGKGQINIALEVLNTFNINIPVCGMVKDNKHRTRGLIYNGEEIIINKYGSVMKFITRVQDEVHRFAISYHRSLRGKNSFHSLLDDIPNIGEKRKKDLLFNFKSIDNIKKATYEELLSISSMDKKSAESILEFFK.

The GIY-YIG domain maps to 13–92; it reads DKPGVYLMKN…IKKYRPKYNI (80 aa). Residues 204–239 enclose the UVR domain; sequence LDIVENFKLNMEKAAGNLEFEKAAMLRDKINIIEKI.

The protein belongs to the UvrC family. As to quaternary structure, interacts with UvrB in an incision complex.

It localises to the cytoplasm. Functionally, the UvrABC repair system catalyzes the recognition and processing of DNA lesions. UvrC both incises the 5' and 3' sides of the lesion. The N-terminal half is responsible for the 3' incision and the C-terminal half is responsible for the 5' incision. The sequence is that of UvrABC system protein C from Clostridium botulinum (strain 657 / Type Ba4).